Consider the following 346-residue polypeptide: Sugar utilization regulatory protein IMP2 (346 aa).

Positions 1–29 (MQKSILLTKPDGTQSNLHSIKTETPTTVE) are enriched in polar residues. Disordered regions lie at residues 1 to 74 (MQKS…RVRE) and 91 to 132 (LRVV…DIEN). At Thr-24 the chain carries Phosphothreonine. Residues 40-49 (RERGRSKKKR) show a composition bias toward basic residues. The span at 96–132 (VDSEEEGEGNDEDDDDGDGDDMDEEESDEEQVSDIEN) shows a compositional bias: acidic residues.

Controls the nucleo-mitochondrial dependence of galactose, maltose and raffinose utilization. Becomes essential in the absence of functioning mitochondria. The protein is Sugar utilization regulatory protein IMP2 (IMP2') of Saccharomyces cerevisiae (strain ATCC 204508 / S288c) (Baker's yeast).